A 105-amino-acid polypeptide reads, in one-letter code: Transcriptional regulator SutA (105 aa).

Over residues 1–37 (MSEEELEQDELDGADEDDGEELAAADDGEADSSDGDE) the composition is skewed to acidic residues. The segment at 1-105 (MSEEELEQDE…PDSKYGSRPI (105 aa)) is disordered. 2 stretches are compositionally biased toward basic and acidic residues: residues 59 to 83 (AKQK…KVQE) and 92 to 105 (PPKK…SRPI).

In terms of assembly, interacts with RNA polymerase.

In terms of biological role, causes widespread changes in gene expression, and plays a direct role in the regulation of genes encoding ribosomal components. Associates with chromosomal DNA through interaction with RNA polymerase. Contributes to biofilm formation and secondary metabolite production. Important during transitions to and from the survival state. This chain is Transcriptional regulator SutA, found in Pseudomonas aeruginosa (strain UCBPP-PA14).